The following is a 303-amino-acid chain: Bifunctional protein FolD (303 aa).

NADP(+)-binding positions include 175 to 177 and Ile-243; that span reads GVS.

It belongs to the tetrahydrofolate dehydrogenase/cyclohydrolase family. In terms of assembly, homodimer.

It catalyses the reaction (6R)-5,10-methylene-5,6,7,8-tetrahydrofolate + NADP(+) = (6R)-5,10-methenyltetrahydrofolate + NADPH. The enzyme catalyses (6R)-5,10-methenyltetrahydrofolate + H2O = (6R)-10-formyltetrahydrofolate + H(+). Its pathway is one-carbon metabolism; tetrahydrofolate interconversion. Functionally, catalyzes the oxidation of 5,10-methylenetetrahydrofolate to 5,10-methenyltetrahydrofolate and then the hydrolysis of 5,10-methenyltetrahydrofolate to 10-formyltetrahydrofolate. The polypeptide is Bifunctional protein FolD (Xanthomonas euvesicatoria pv. vesicatoria (strain 85-10) (Xanthomonas campestris pv. vesicatoria)).